The chain runs to 308 residues: Insoluble matrix shell protein 4 (308 aa).

Disordered regions lie at residues 1 to 21, 47 to 104, and 134 to 250; these read HGNGYNSNNGNGYNSNNGNGY, NTNS…PNAV, and YDSN…NTNS. Low complexity predominate over residues 47–99; it reads NTNSLNGNNNGNSNNNGNGNNNGNSNNNGNGNNNGNTNNGNSYDSNTNDDSNS.

As to expression, component of the acid-insoluble organic matrix of the calcified shell.

The protein localises to the secreted. The chain is Insoluble matrix shell protein 4 from Ruditapes philippinarum (Japanese carpet shell).